A 713-amino-acid polypeptide reads, in one-letter code: RNA-binding protein vts1 (713 aa).

The span at 154–188 (NSGLSLDKSLPSSPKGDSPSLSSSLPSLTTKSNLS) shows a compositional bias: low complexity. Disordered stretches follow at residues 154–208 (NSGL…SSKH), 254–336 (EPPA…RDRG), 356–389 (DESSRSRWSNISYSPPPPPPPPELLNHSPKSRPL), 554–596 (EKIE…GNEL), and 667–713 (KAAK…SSMD). 2 stretches are compositionally biased toward polar residues: residues 189-208 (GNLNMVTPASTQGPAFSSKH) and 258-281 (SSASTSPRNTPTPSNNGTSINANV). 2 stretches are compositionally biased toward low complexity: residues 282 to 297 (TSSLTSNSTGKTSKTT) and 304 to 320 (SKKSLPSNSTPSKPNTS). Residues 321-330 (FFETPHNNIW) show a composition bias toward polar residues. The span at 369–378 (SPPPPPPPPE) shows a compositional bias: pro residues. Residues 559–569 (PPNNSKNQTYR) are compositionally biased toward polar residues. Residues 570–583 (RSSRGSNKTRKSIS) are compositionally biased toward basic residues. The SAM domain maps to 595-656 (ELPQDIPSWL…LKSFQEVAPL (62 aa)). The span at 670 to 681 (KNQSSESLTSFK) shows a compositional bias: polar residues. Ser673 is modified (phosphoserine). Positions 691-702 (SGSMSNEISSNS) are enriched in low complexity. Positions 703–713 (TKQDVSSSSMD) are enriched in polar residues.

The protein belongs to the VTS1 family. As to quaternary structure, monomer. Binds to RNA.

Its subcellular location is the cytoplasm. The protein resides in the cytosol. It is found in the P-body. Its function is as follows. RNA-binding protein involved in post-transcriptional regulation through transcript degradation. The protein is RNA-binding protein vts1 of Schizosaccharomyces pombe (strain 972 / ATCC 24843) (Fission yeast).